The chain runs to 473 residues: Photosystem II CP43 reaction center protein (473 aa).

A propeptide spanning residues 1 to 14 (MKTLYSLRRFYHVE) is cleaved from the precursor. T15 is subject to N-acetylthreonine. T15 bears the Phosphothreonine mark. Helical transmembrane passes span 69-93 (LFEVAHFVPEKPMYEQGLILLPHLA), 134-155 (LLGPETLEESFPFFGYVWKDRN), 178-200 (KALYFGGVYDTWAPGGGDVRKIT), 255-275 (KPFAWARRALVWSGEAYLSYS), and 291-312 (WFNNTAYPSEFYGPTGPEASQA). Residue E367 participates in [CaMn4O5] cluster binding. A helical transmembrane segment spans residues 447–471 (RARAAAAGFEKGIDRDFEPVLSMTP).

This sequence belongs to the PsbB/PsbC family. PsbC subfamily. PSII is composed of 1 copy each of membrane proteins PsbA, PsbB, PsbC, PsbD, PsbE, PsbF, PsbH, PsbI, PsbJ, PsbK, PsbL, PsbM, PsbT, PsbX, PsbY, PsbZ, Psb30/Ycf12, at least 3 peripheral proteins of the oxygen-evolving complex and a large number of cofactors. It forms dimeric complexes. Binds multiple chlorophylls and provides some of the ligands for the Ca-4Mn-5O cluster of the oxygen-evolving complex. It may also provide a ligand for a Cl- that is required for oxygen evolution. PSII binds additional chlorophylls, carotenoids and specific lipids. serves as cofactor.

Its subcellular location is the plastid. The protein localises to the chloroplast thylakoid membrane. Its function is as follows. One of the components of the core complex of photosystem II (PSII). It binds chlorophyll and helps catalyze the primary light-induced photochemical processes of PSII. PSII is a light-driven water:plastoquinone oxidoreductase, using light energy to abstract electrons from H(2)O, generating O(2) and a proton gradient subsequently used for ATP formation. In Capsella bursa-pastoris (Shepherd's purse), this protein is Photosystem II CP43 reaction center protein.